A 212-amino-acid polypeptide reads, in one-letter code: 3-isopropylmalate dehydratase small subunit 1 (212 aa).

This sequence belongs to the LeuD family. LeuD type 1 subfamily. As to quaternary structure, heterodimer of LeuC and LeuD.

It catalyses the reaction (2R,3S)-3-isopropylmalate = (2S)-2-isopropylmalate. It functions in the pathway amino-acid biosynthesis; L-leucine biosynthesis; L-leucine from 3-methyl-2-oxobutanoate: step 2/4. Functionally, catalyzes the isomerization between 2-isopropylmalate and 3-isopropylmalate, via the formation of 2-isopropylmaleate. This Chromobacterium violaceum (strain ATCC 12472 / DSM 30191 / JCM 1249 / CCUG 213 / NBRC 12614 / NCIMB 9131 / NCTC 9757 / MK) protein is 3-isopropylmalate dehydratase small subunit 1.